The following is a 420-amino-acid chain: Cytochrome P-450 monooxygenase DoxA (420 aa).

Cys-367 contributes to the heme binding site.

It belongs to the cytochrome P450 family. In terms of assembly, monomer. Heme serves as cofactor.

The protein localises to the cytoplasm. It carries out the reaction 13-deoxydaunorubicin + NADPH + O2 + H(+) = 13-dihydrodaunorubicin + NADP(+) + H2O. The enzyme catalyses 13-dihydrodaunorubicin + NADPH + O2 + H(+) = daunorubicin + NADP(+) + 2 H2O. The catalysed reaction is 13-deoxycarminomycin + NADPH + O2 + H(+) = 13-dihydrocarminomycin + NADP(+) + H2O. It catalyses the reaction 13-dihydrocarminomycin + NADPH + O2 + H(+) = carminomycin + NADP(+) + 2 H2O. It carries out the reaction daunorubicin + NADPH + O2 + H(+) = doxorubicin + NADP(+) + H2O. It functions in the pathway antibiotic biosynthesis; daunorubicin biosynthesis. It participates in antibiotic biosynthesis; carminomycin biosynthesis. Its pathway is antibiotic biosynthesis; doxorubicin biosynthesis. In terms of biological role, involved in the biosynthesis of the anthracyclines carminomycin, daunorubicin (daunomycin) and doxorubicin (adriamycin) which are aromatic polyketide antibiotics that exhibit high cytotoxicity and are widely applied in the chemotherapy of a variety of cancers. In vivo, DoxA catalyzes the C-13 hydroxylation of 13-deoxycarminomycin and 13-deoxydaunorubicin to yield 13-dihydrocarminomycin and 13-dihydrodaunorubicin, respectively, as well as the oxidation of these 13-dihydro-anthracyclines to their respective 13-keto forms, carminomycin and daunorubicin. In vivo, it also catalyzes the C-14 hydroxylation of daunorubicin to form doxorubicin. It can only use NADP. DoxA acts jointly with DnrV. This chain is Cytochrome P-450 monooxygenase DoxA (doxA), found in Streptomyces peucetius subsp. caesius.